A 281-amino-acid polypeptide reads, in one-letter code: Oxidoreductase-like protein SRL4 (281 aa).

5 residues coordinate NADP(+): leucine 39, threonine 60, lysine 67, lysine 152, and lysine 197. The active-site Lowers pKa of active site Tyr is lysine 197.

This sequence belongs to the short-chain dehydrogenases/reductases (SDR) family.

May be involved in the regulation of dNTP production. Induces the SOS system when expressed in E.coli, therefore, it may play a role in DNA metabolism and/or in genome stability. This is Oxidoreductase-like protein SRL4 (SRL4) from Saccharomyces cerevisiae (strain ATCC 204508 / S288c) (Baker's yeast).